The chain runs to 261 residues: Cytosolic Fe-S cluster assembly factor Nubp2 homolog (261 aa).

Position 14–21 (14–21 (GKGGVGKS)) interacts with ATP. 2 residues coordinate [4Fe-4S] cluster: cysteine 188 and cysteine 191.

It belongs to the Mrp/NBP35 ATP-binding proteins family. NUBP2/CFD1 subfamily. In terms of assembly, heterotetramer of 2 Nubp1 and 2 Nubp2 chains. [4Fe-4S] cluster is required as a cofactor.

It localises to the cytoplasm. Component of the cytosolic iron-sulfur (Fe/S) protein assembly (CIA) machinery. Required for maturation of extramitochondrial Fe-S proteins. The Nubp1-Nubp2 heterotetramer forms a Fe-S scaffold complex, mediating the de novo assembly of an Fe-S cluster and its transfer to target apoproteins. This is Cytosolic Fe-S cluster assembly factor Nubp2 homolog from Drosophila ananassae (Fruit fly).